Reading from the N-terminus, the 247-residue chain is Neurotrophic factor BDNF precursor form (247 aa).

Positions 1 to 18 (MTILFLTMVISYFGCMKA) are cleaved as a signal peptide. The propeptide occupies 19–128 (APMKEANIRG…AANMSMRVRR (110 aa)). N121 is a glycosylation site (N-linked (GlcNAc...) asparagine). Cystine bridges form between C141/C208, C186/C237, and C196/C239.

Belongs to the NGF-beta family. Monomers and homodimers. Binds to NTRK2/TRKB. Can form heterodimers with other neurotrophin family members, such as NTF3 and NTF4 (in vitro), but the physiological relevance of this is not clear. BDNF precursor form: interacts with the heterodimer formed by NGFR and SORCS2. In terms of processing, N-glycosylated and glycosulfated, contrary to mature BDNF. Mature BDNF is produced by proteolytic removal of the propeptide, catalyzed by a FURIN family member. In addition, the precursor form is proteolytically cleaved within the propeptide, but this is not an obligatory intermediate for the production of mature BDNF. Can be converted into mature BDNF by plasmin (PLG). As to expression, detected in blood plasma and in saliva (at protein level). Brain. Highly expressed in hippocampus, amygdala, cerebral cortex and cerebellum. Also expressed in heart, lung, skeletal muscle, testis, prostate and placenta.

It is found in the secreted. Important signaling molecule that activates signaling cascades downstream of NTRK2. During development, promotes the survival and differentiation of selected neuronal populations of the peripheral and central nervous systems. Participates in axonal growth, pathfinding and in the modulation of dendritic growth and morphology. Major regulator of synaptic transmission and plasticity at adult synapses in many regions of the CNS. The versatility of BDNF is emphasized by its contribution to a range of adaptive neuronal responses including long-term potentiation (LTP), long-term depression (LTD), certain forms of short-term synaptic plasticity, as well as homeostatic regulation of intrinsic neuronal excitability. In terms of biological role, important signaling molecule that activates signaling cascades downstream of NTRK2. Activates signaling cascades via the heterodimeric receptor formed by NGFR and SORCS2. Signaling via NGFR and SORCS2 plays a role in synaptic plasticity and long-term depression (LTD). Binding to NGFR and SORCS2 promotes neuronal apoptosis. Promotes neuronal growth cone collapse. The polypeptide is Neurotrophic factor BDNF precursor form (Homo sapiens (Human)).